A 353-amino-acid chain; its full sequence is Ribosomal RNA large subunit methyltransferase M (353 aa).

Residues Ser-179, 212 to 215 (APGG), Asp-231, Asp-251, and Asp-267 contribute to the S-adenosyl-L-methionine site. The active-site Proton acceptor is Lys-296.

This sequence belongs to the class I-like SAM-binding methyltransferase superfamily. RNA methyltransferase RlmE family. RlmM subfamily. In terms of assembly, monomer.

It localises to the cytoplasm. The catalysed reaction is cytidine(2498) in 23S rRNA + S-adenosyl-L-methionine = 2'-O-methylcytidine(2498) in 23S rRNA + S-adenosyl-L-homocysteine + H(+). Its function is as follows. Catalyzes the 2'-O-methylation at nucleotide C2498 in 23S rRNA. The chain is Ribosomal RNA large subunit methyltransferase M from Laribacter hongkongensis (strain HLHK9).